Consider the following 258-residue polypeptide: Translocon-associated protein subunit alpha (258 aa).

An N-terminal signal peptide occupies residues 1-24 (MMNLRVLFLALLLLASPLLQVARC). Topologically, residues 25–190 (QSDAEDHSSL…ESGGLLSGES (166 aa)) are lumenal. 3 N-linked (GlcNAc...) asparagine glycosylation sites follow: Asn-57, Asn-119, and Asn-127. The helical transmembrane segment at 191-209 (VFLLTLGIGLLLLLGLWAY) threads the bilayer. Residues 210 to 258 (SQVQRLTKKTKKVSKVEVGTRSTEASLDEWLEGTTLAKTSSGKTKNKKN) lie on the Cytoplasmic side of the membrane.

It belongs to the TRAP-alpha family. In terms of assembly, heterotetramer of TRAP-alpha, TRAP-beta, TRAP-delta and TRAP-gamma. Post-translationally, phosphorylated in its cytoplasmic tail.

The protein localises to the endoplasmic reticulum membrane. Functionally, TRAP proteins are part of a complex whose function is to bind calcium to the ER membrane and thereby regulate the retention of ER resident proteins. May be involved in the recycling of the translocation apparatus after completion of the translocation process or may function as a membrane-bound chaperone facilitating folding of translocated proteins. This chain is Translocon-associated protein subunit alpha, found in Arabidopsis thaliana (Mouse-ear cress).